The following is a 629-amino-acid chain: MSTTNYPLLERVNDPADLRRLPRAELKALATELRAFVLESVSKTGGHLSSNLGTVELTVALHAVFDTPRDRLVWDVGHQTYPHKILTGRRDRMPSLRQLGGLSGFPQRAESEYDTFGTAHSSTSISAALGMALAAKQRGDERRCVAIIGDGAMTAGMAFEALNNAGVADANLLVILNDNDMSISPPVGALNRYLAQLMSGQFYAKARDVGKSVLKNAPPLLELAKRLEQQAKGMVVPATLFEKFGFNYIGPIDGHDLDSLIPTLENIRGLKGPQFLHVVTKKGQGYKLAEADPVAYHGPGKFDPRVGLVKPATPPKQTFTQVFGQWLCDMAEKDERLVGITPAMREGSGMVEFHQRFPERYYDVGIAEQHAVTFAAGMACEGAKPVVAIYSTFLQRAYDQLIHDVALQNLPVVFALDRAGLVGADGATHAGAYDIAFVRCIPNMSMACPADERECRQLLTTAYEQDHPVAVRYPRGAGVGVAPLPDLEGLPFGKGEVRRKGRRMAILAFGTLLYPALQAAEALDATVVNMRWAKPLDTQLLLQVAAEHDALVTVEEGCIMGGAGSAVAEALAAAGVQRPLLQLGLPDAFIEHGDPAKLLALQGLDAAGMQRSITERFGALPGEQALAAA.

Thiamine diphosphate contacts are provided by residues H78 and 119-121 (AHS). D150 is a binding site for Mg(2+). Residues 151 to 152 (GA), N179, Y286, and E368 each bind thiamine diphosphate. N179 serves as a coordination point for Mg(2+).

The protein belongs to the transketolase family. DXPS subfamily. As to quaternary structure, homodimer. It depends on Mg(2+) as a cofactor. Thiamine diphosphate serves as cofactor.

It carries out the reaction D-glyceraldehyde 3-phosphate + pyruvate + H(+) = 1-deoxy-D-xylulose 5-phosphate + CO2. It functions in the pathway metabolic intermediate biosynthesis; 1-deoxy-D-xylulose 5-phosphate biosynthesis; 1-deoxy-D-xylulose 5-phosphate from D-glyceraldehyde 3-phosphate and pyruvate: step 1/1. Functionally, catalyzes the acyloin condensation reaction between C atoms 2 and 3 of pyruvate and glyceraldehyde 3-phosphate to yield 1-deoxy-D-xylulose-5-phosphate (DXP). This chain is 1-deoxy-D-xylulose-5-phosphate synthase, found in Acidovorax ebreus (strain TPSY) (Diaphorobacter sp. (strain TPSY)).